The sequence spans 412 residues: Poly-beta-1,6-N-acetyl-D-glucosamine synthase (412 aa).

4 consecutive transmembrane segments (helical) span residues 7–28 (LLFYPIFMSIYWIVGSIYYFFI), 298–320 (IASITWVYIVICYLSFLVITANI), 332–354 (IFFFSSFTMTFINIIQFTVALFI), and 364–386 (VGLIFLSWYPTLYWVINAAVVIM).

It belongs to the glycosyltransferase 2 family.

The protein resides in the cell membrane. Its function is as follows. N-acetylglucosaminyltransferase that catalyzes the polymerization of single monomer units of UDP-N-acetylglucosamine to produce the linear homomer poly-beta-1,6-N-acetyl-D-glucosamine (PNAG, also referred to as PIA), a biofilm adhesin polysaccharide. Requires IcaD for full activity. This is Poly-beta-1,6-N-acetyl-D-glucosamine synthase (icaA) from Staphylococcus epidermidis.